A 220-amino-acid polypeptide reads, in one-letter code: Peptide methionine sulfoxide reductase MsrA (220 aa).

The active site involves Cys-54.

Belongs to the MsrA Met sulfoxide reductase family.

It catalyses the reaction L-methionyl-[protein] + [thioredoxin]-disulfide + H2O = L-methionyl-(S)-S-oxide-[protein] + [thioredoxin]-dithiol. The catalysed reaction is [thioredoxin]-disulfide + L-methionine + H2O = L-methionine (S)-S-oxide + [thioredoxin]-dithiol. In terms of biological role, has an important function as a repair enzyme for proteins that have been inactivated by oxidation. Catalyzes the reversible oxidation-reduction of methionine sulfoxide in proteins to methionine. This is Peptide methionine sulfoxide reductase MsrA from Salinispora tropica (strain ATCC BAA-916 / DSM 44818 / JCM 13857 / NBRC 105044 / CNB-440).